The following is a 249-amino-acid chain: NAD(P)H-quinone oxidoreductase subunit K 2 (249 aa).

The [4Fe-4S] cluster site is built by Cys-54, Cys-55, Cys-119, and Cys-150.

Belongs to the complex I 20 kDa subunit family. NDH-1 can be composed of about 15 different subunits; different subcomplexes with different compositions have been identified which probably have different functions. Requires [4Fe-4S] cluster as cofactor.

The protein resides in the cell inner membrane. It catalyses the reaction a plastoquinone + NADH + (n+1) H(+)(in) = a plastoquinol + NAD(+) + n H(+)(out). The catalysed reaction is a plastoquinone + NADPH + (n+1) H(+)(in) = a plastoquinol + NADP(+) + n H(+)(out). In terms of biological role, NDH-1 shuttles electrons from an unknown electron donor, via FMN and iron-sulfur (Fe-S) centers, to quinones in the respiratory and/or the photosynthetic chain. The immediate electron acceptor for the enzyme in this species is believed to be plastoquinone. Couples the redox reaction to proton translocation, and thus conserves the redox energy in a proton gradient. Cyanobacterial NDH-1 also plays a role in inorganic carbon-concentration. In Gloeobacter violaceus (strain ATCC 29082 / PCC 7421), this protein is NAD(P)H-quinone oxidoreductase subunit K 2.